A 393-amino-acid chain; its full sequence is Peptidyl-prolyl cis-trans isomerase CYP7 (393 aa).

Residues 8 to 196 enclose the PPIase cyclophilin-type domain; it reads YLDISIDKKP…SDVRISDCGV (189 aa). TPR repeat units follow at residues 240–273, 292–325, and 330–363; these read ANIIKESGTLLFKKKDYSNAFFKYRKSLNYINEY, MKIYLNLSLVLFNLERYDDAIMYATYLLEMDNVP, and AKAYYRRGNSYLKKKRLDEALQDYIFCKEKNPDD.

In terms of assembly, interacts with RPD3 and CNS1.

It catalyses the reaction [protein]-peptidylproline (omega=180) = [protein]-peptidylproline (omega=0). In terms of biological role, PPIases accelerate the folding of proteins. It catalyzes the cis-trans isomerization of proline imidic peptide bonds in oligopeptides. Plays a major role in negative regulation of the heat shock transcription factor (HSF). This is Peptidyl-prolyl cis-trans isomerase CYP7 (CPR7) from Saccharomyces cerevisiae (strain ATCC 204508 / S288c) (Baker's yeast).